The chain runs to 212 residues: ATP-dependent dethiobiotin synthetase BioD (212 aa).

G13–V18 contacts ATP. T17 lines the Mg(2+) pocket. The active site involves K33. Residue S37 participates in substrate binding. Residue E100 coordinates Mg(2+). ATP contacts are provided by residues E100–G103 and P184–L186.

The protein belongs to the dethiobiotin synthetase family. As to quaternary structure, homodimer. It depends on Mg(2+) as a cofactor.

Its subcellular location is the cytoplasm. It catalyses the reaction (7R,8S)-7,8-diammoniononanoate + CO2 + ATP = (4R,5S)-dethiobiotin + ADP + phosphate + 3 H(+). It functions in the pathway cofactor biosynthesis; biotin biosynthesis; biotin from 7,8-diaminononanoate: step 1/2. Its function is as follows. Catalyzes a mechanistically unusual reaction, the ATP-dependent insertion of CO2 between the N7 and N8 nitrogen atoms of 7,8-diaminopelargonic acid (DAPA, also called 7,8-diammoniononanoate) to form a ureido ring. In Brucella canis (strain ATCC 23365 / NCTC 10854 / RM-666), this protein is ATP-dependent dethiobiotin synthetase BioD.